Reading from the N-terminus, the 117-residue chain is Modulator protein MzrA (117 aa).

The Cytoplasmic segment spans residues 1–9; it reads MNSPGLRKP. Residues 10–29 form a helical membrane-spanning segment; that stretch reads TIWRPLLLLFPLLALLLSMS. Residues 30–117 lie on the Periplasmic side of the membrane; it reads SPRLPDEVML…THGTIRVARS (88 aa).

The protein belongs to the MzrA family. In terms of assembly, interacts with EnvZ.

It is found in the cell inner membrane. Functionally, modulates the activity of the EnvZ/OmpR two-component regulatory system, probably by directly modulating EnvZ enzymatic activity and increasing stability of phosphorylated OmpR. The chain is Modulator protein MzrA from Dickeya zeae (strain Ech586) (Dickeya dadantii (strain Ech586)).